Reading from the N-terminus, the 258-residue chain is MLILISPAKTLDYQSPLTTTRYTLPELLDNSQQLIHEARKLTPPQISTLMRISDKLAGINAARFHDWQPDFTPANARQAILAFKGDVYTGLQAETFSEDDFDFAQQHLRMLSGLYGVLRPLDLMQPYRLEMGIRLENARGKDLYQFWGDIITNKLNEALAAQGDNVVINLAADEYFKSVKPKKLNAEIIKPVFLDEKNGKFKIISFYAKKARGLMSRFIIENRLTKPEQLTGFNSEGYFFDEDSSSNGELVFKRYEQR.

The protein belongs to the UPF0246 family.

The polypeptide is UPF0246 protein YaaA (Shigella flexneri serotype 5b (strain 8401)).